A 79-amino-acid chain; its full sequence is Scutelatoxin (79 aa).

A signal peptide spans 1 to 21 (MKTLLLTLVVMTIMCLDLGYT). 4 disulfides stabilise this stretch: Cys-24-Cys-41, Cys-34-Cys-59, Cys-63-Cys-71, and Cys-72-Cys-77.

It belongs to the three-finger toxin family. Short-chain subfamily. Expressed by the venom gland.

Its subcellular location is the secreted. This Oxyuranus scutellatus scutellatus (Australian taipan) protein is Scutelatoxin.